Reading from the N-terminus, the 467-residue chain is A-type ATP synthase subunit B (467 aa).

Positions 95-114 are disordered; sequence GKGQPRDHMPLPPPEDFRDV.

This sequence belongs to the ATPase alpha/beta chains family. As to quaternary structure, has multiple subunits with at least A(3), B(3), C, D, E, F, H, I and proteolipid K(x).

The protein resides in the cell membrane. Functionally, component of the A-type ATP synthase that produces ATP from ADP in the presence of a proton gradient across the membrane. The B chain is a regulatory subunit. This Pyrobaculum neutrophilum (strain DSM 2338 / JCM 9278 / NBRC 100436 / V24Sta) (Thermoproteus neutrophilus) protein is A-type ATP synthase subunit B.